The primary structure comprises 327 residues: Phenylalanine--tRNA ligase alpha subunit (327 aa).

Glu-252 serves as a coordination point for Mg(2+).

It belongs to the class-II aminoacyl-tRNA synthetase family. Phe-tRNA synthetase alpha subunit type 1 subfamily. As to quaternary structure, tetramer of two alpha and two beta subunits. Mg(2+) serves as cofactor.

It localises to the cytoplasm. The enzyme catalyses tRNA(Phe) + L-phenylalanine + ATP = L-phenylalanyl-tRNA(Phe) + AMP + diphosphate + H(+). This Shigella flexneri protein is Phenylalanine--tRNA ligase alpha subunit.